We begin with the raw amino-acid sequence, 421 residues long: ATP-dependent RNA helicase RhlB (421 aa).

Positions 9 to 37 match the Q motif motif; that stretch reads QKFSDFALHPKVVEALEKKGFHNCTPIQA. In terms of domain architecture, Helicase ATP-binding spans 40-219; sequence LPLTLAGRDV…FEQMNNAEYI (180 aa). 53–60 contributes to the ATP binding site; sequence AQTGTGKT. Residues 165 to 168 carry the DEAD box motif; sequence DEAD. The region spanning 245 to 390 is the Helicase C-terminal domain; it reads RLLQTLIEEE…VSKYNPDALM (146 aa). The segment at 392–421 is disordered; that stretch reads DLPKPLRLTRPRTGNGPRRTGTPRNRRRSG. Residues 402 to 414 are compositionally biased toward low complexity; sequence PRTGNGPRRTGTP.

It belongs to the DEAD box helicase family. RhlB subfamily. As to quaternary structure, component of the RNA degradosome, which is a multiprotein complex involved in RNA processing and mRNA degradation.

Its subcellular location is the cytoplasm. It carries out the reaction ATP + H2O = ADP + phosphate + H(+). Functionally, DEAD-box RNA helicase involved in RNA degradation. Has RNA-dependent ATPase activity and unwinds double-stranded RNA. The protein is ATP-dependent RNA helicase RhlB of Escherichia coli O7:K1 (strain IAI39 / ExPEC).